The following is a 316-amino-acid chain: Beta-ketoacyl-[acyl-carrier-protein] synthase III (316 aa).

Catalysis depends on residues Cys-112 and His-243. An ACP-binding region spans residues 244 to 248; sequence QANIR. Residue Asn-273 is part of the active site.

This sequence belongs to the thiolase-like superfamily. FabH family. In terms of assembly, homodimer.

It is found in the cytoplasm. The catalysed reaction is malonyl-[ACP] + acetyl-CoA + H(+) = 3-oxobutanoyl-[ACP] + CO2 + CoA. Its pathway is lipid metabolism; fatty acid biosynthesis. Catalyzes the condensation reaction of fatty acid synthesis by the addition to an acyl acceptor of two carbons from malonyl-ACP. Catalyzes the first condensation reaction which initiates fatty acid synthesis and may therefore play a role in governing the total rate of fatty acid production. Possesses both acetoacetyl-ACP synthase and acetyl transacylase activities. Its substrate specificity determines the biosynthesis of branched-chain and/or straight-chain of fatty acids. The chain is Beta-ketoacyl-[acyl-carrier-protein] synthase III from Haemophilus ducreyi (strain 35000HP / ATCC 700724).